The chain runs to 187 residues: Large ribosomal subunit protein uL5 (187 aa).

This sequence belongs to the universal ribosomal protein uL5 family. As to quaternary structure, part of the 50S ribosomal subunit; part of the 5S rRNA/L5/L18/L25 subcomplex. Contacts the 5S rRNA and the P site tRNA. Forms a bridge to the 30S subunit in the 70S ribosome.

This is one of the proteins that bind and probably mediate the attachment of the 5S RNA into the large ribosomal subunit, where it forms part of the central protuberance. In the 70S ribosome it contacts protein S13 of the 30S subunit (bridge B1b), connecting the 2 subunits; this bridge is implicated in subunit movement. Contacts the P site tRNA; the 5S rRNA and some of its associated proteins might help stabilize positioning of ribosome-bound tRNAs. The chain is Large ribosomal subunit protein uL5 from Mycobacteroides abscessus (strain ATCC 19977 / DSM 44196 / CCUG 20993 / CIP 104536 / JCM 13569 / NCTC 13031 / TMC 1543 / L948) (Mycobacterium abscessus).